The chain runs to 162 residues: MSIKFFLLVSRQGKVRLAKWFNTLSIKERAKIIRDVSSLVITRKPKMCNFVEYKGEKIVYRRYASLFFVCGIEQDDNELIILEVIHKFVECLDKYFGNVCELDLIFNFEKAYYVMEELLLAGELQESSKTNVLSAVLAGDAESEADAQQDSLQKLVGSVKKR.

This sequence belongs to the adaptor complexes small subunit family. Adaptor protein complex 1 (AP-1) is a heterotetramer composed of two large adaptins (gamma-type subunit apl4 and beta-type subunit apl2), a medium adaptin (mu-type subunit apm1) and a small adaptin (sigma-type subunit aps1). AP-1 interacts with clathrin.

It localises to the cytoplasm. Its subcellular location is the nucleus. The protein localises to the cytoplasmic vesicle. The protein resides in the clathrin-coated vesicle membrane. It is found in the endosome. It localises to the golgi apparatus. Component of the AP-1 complex which links clathrin to receptors in coated vesicles. Clathrin-associated protein complexes are believed to interact with the cytoplasmic tails of membrane proteins, leading to their selection and concentration. The protein is AP-1 complex subunit sigma-1 (vas2) of Schizosaccharomyces pombe (strain 972 / ATCC 24843) (Fission yeast).